Here is a 406-residue protein sequence, read N- to C-terminus: Serine hydroxymethyltransferase (406 aa).

(6S)-5,6,7,8-tetrahydrofolate contacts are provided by residues L111 and 115–117 (GHL). K220 carries the post-translational modification N6-(pyridoxal phosphate)lysine.

Belongs to the SHMT family. Homodimer. Pyridoxal 5'-phosphate serves as cofactor.

The protein resides in the cytoplasm. It carries out the reaction (6R)-5,10-methylene-5,6,7,8-tetrahydrofolate + glycine + H2O = (6S)-5,6,7,8-tetrahydrofolate + L-serine. The protein operates within one-carbon metabolism; tetrahydrofolate interconversion. Its pathway is amino-acid biosynthesis; glycine biosynthesis; glycine from L-serine: step 1/1. In terms of biological role, catalyzes the reversible interconversion of serine and glycine with tetrahydrofolate (THF) serving as the one-carbon carrier. This reaction serves as the major source of one-carbon groups required for the biosynthesis of purines, thymidylate, methionine, and other important biomolecules. Also exhibits THF-independent aldolase activity toward beta-hydroxyamino acids, producing glycine and aldehydes, via a retro-aldol mechanism. The chain is Serine hydroxymethyltransferase from Mycoplasma pneumoniae (strain ATCC 29342 / M129 / Subtype 1) (Mycoplasmoides pneumoniae).